The primary structure comprises 157 residues: MIHDAFEDFAAALPQMTALVGLDFGEKTIGVAVSDRIGAVATPLETIRRKKFTLDSNRLLEIIAGRDINGILLGLPRNMDGSEGPRCQSTRAFARNLSRVTDLPIGFWDERLSTVAAERALLEADTSRKRRAEVIDHVAASYILQGALDRMRHIRSS.

The protein belongs to the YqgF nuclease family.

Its subcellular location is the cytoplasm. In terms of biological role, could be a nuclease involved in processing of the 5'-end of pre-16S rRNA. This is Putative pre-16S rRNA nuclease from Ruegeria sp. (strain TM1040) (Silicibacter sp.).